Consider the following 323-residue polypeptide: tRNA U34 carboxymethyltransferase (323 aa).

Residues lysine 91, tryptophan 105, lysine 110, glycine 130, 152-154 (DPT), 181-182 (IE), methionine 196, tyrosine 200, and arginine 315 each bind carboxy-S-adenosyl-L-methionine.

It belongs to the class I-like SAM-binding methyltransferase superfamily. CmoB family. As to quaternary structure, homotetramer.

The catalysed reaction is carboxy-S-adenosyl-L-methionine + 5-hydroxyuridine(34) in tRNA = 5-carboxymethoxyuridine(34) in tRNA + S-adenosyl-L-homocysteine + H(+). Its function is as follows. Catalyzes carboxymethyl transfer from carboxy-S-adenosyl-L-methionine (Cx-SAM) to 5-hydroxyuridine (ho5U) to form 5-carboxymethoxyuridine (cmo5U) at position 34 in tRNAs. The chain is tRNA U34 carboxymethyltransferase from Salmonella paratyphi B (strain ATCC BAA-1250 / SPB7).